Consider the following 238-residue polypeptide: Protein-lysine N-methyltransferase efm4 (238 aa).

Belongs to the class I-like SAM-binding methyltransferase superfamily. EFM4 family.

It is found in the cytoplasm. The protein localises to the nucleus. In terms of biological role, S-adenosyl-L-methionine-dependent protein-lysine N-methyltransferase that mono- and dimethylates elongation factor 1-alpha at 'Lys-316'. May play a role in intracellular transport. This is Protein-lysine N-methyltransferase efm4 from Schizosaccharomyces pombe (strain 972 / ATCC 24843) (Fission yeast).